We begin with the raw amino-acid sequence, 252 residues long: MGKNKLEKFADMASYPHVFEYPYSAVDNVPFDMKGKWHQEFFGNDHPIVLELGCGRGEYTVGLGRMFPDKNFIAVDIKGSRMWTGATESLQAGMKNVAFLRTNIEIIERFFAAGEVSEIWLTFSDPQMKKATKRLTSTYFMERYRKFLKPDGIIHLKTDSNFMFTYTKYMIEANQLPVEFITEDLYHSDLVDDILSIKTYYEQQWLDRGLNIKYIKFRLPQEGVLQEPDVEIELDPYRSYNRSKRSGLQTSK.

S-adenosyl-L-methionine contacts are provided by Glu-51, Asp-76, Asn-103, and Asp-125. Residue Asp-125 is part of the active site. Substrate-binding positions include Lys-129, Asp-159, and 199–202; that span reads TYYE.

Belongs to the class I-like SAM-binding methyltransferase superfamily. TrmB family.

The catalysed reaction is guanosine(46) in tRNA + S-adenosyl-L-methionine = N(7)-methylguanosine(46) in tRNA + S-adenosyl-L-homocysteine. The protein operates within tRNA modification; N(7)-methylguanine-tRNA biosynthesis. Its function is as follows. Catalyzes the formation of N(7)-methylguanine at position 46 (m7G46) in tRNA. This is tRNA (guanine-N(7)-)-methyltransferase from Bacteroides thetaiotaomicron (strain ATCC 29148 / DSM 2079 / JCM 5827 / CCUG 10774 / NCTC 10582 / VPI-5482 / E50).